The primary structure comprises 473 residues: Membrane protein TMS1 (473 aa).

Residues 1–6 are Cytoplasmic-facing; that stretch reads MGAVIS. The helical transmembrane segment at 7 to 29 threads the bilayer; it reads LPVSMAGSFVASCFGGCCSNLVT. The Vacuolar portion of the chain corresponds to 30 to 38; that stretch reads KTASSLGSS. Residues 39–61 traverse the membrane as a helical segment; it reads SLGTRLLYAVWLLLNSLISWVSY. Residues 62–81 lie on the Cytoplasmic side of the membrane; it reads SANKSILWPGKTCTGTGECG. Residues 82–104 traverse the membrane as a helical segment; that stretch reads FFTVHRLNFALGCLHLILALVLT. Residues 105–118 are Vacuolar-facing; sequence GVKSTNDVRAALQN. Residues 119-138 form a helical membrane-spanning segment; sequence SWWSLKFILYLCLIVLSFVI. Residues 139-144 lie on the Cytoplasmic side of the membrane; that stretch reads PNDFYI. A helical transmembrane segment spans residues 145–167; that stretch reads FFSKWVSVPSGAIFILVGLILLV. Over 168–194 the chain is Vacuolar; that stretch reads DFAHEWAETCISHVESEDEDSSFWQRF. A helical membrane pass occupies residues 195–217; sequence LVLGTTSMYTASIIMTVVMYVMF. Residues 218–228 are Cytoplasmic-facing; the sequence is CHQQCNMNQTA. A helical membrane pass occupies residues 229–246; that stretch reads VTVNLILTVITLVLSVNP. Residues 247 to 295 lie on the Vacuolar side of the membrane; it reads KIQEANPKSGLAQSSMVSVYCTYLTMSAMSSEPDDKMCNPLVRSSGTRK. The chain crosses the membrane as a helical span at residues 296-318; it reads FSIILGSLFTFIAIAYTTTRAAA. The Cytoplasmic segment spans residues 319–398; sequence NSAFQGTNTN…DDERTGTKYN (80 aa). Residues 399–421 traverse the membrane as a helical segment; it reads YTLFHVIFFLATQWIAILLTINV. Topologically, residues 422 to 435 are vacuolar; the sequence is TQDDVGDFIPVGRT. A helical membrane pass occupies residues 436 to 458; sequence YFYSWVKIVSAWICYALYGWTVV. The Cytoplasmic segment spans residues 459–473; sequence APAIMPDRFDYENYY.

Belongs to the TDE1 family.

The protein resides in the membrane. This Saccharomyces cerevisiae (strain ATCC 204508 / S288c) (Baker's yeast) protein is Membrane protein TMS1 (TMS1).